Here is a 634-residue protein sequence, read N- to C-terminus: MAPKKKIVKKNKGDINEMTIIVEDSPLNKLNALNGLLEGGNGLSCISSELTDASYGPNLLEGLSKMRQENFLCDLVIGTKTKSFDVHKSVMASCSEYFYNILKKDPSIQRVDLNDISPLGLATVIAYAYTGKLTLSLYTIGSIISAAVYLQIHTLVKMCSDFLIREMSVENCMYVVNIAETYSLKNAKAAAQKFIRDNFLEFAESDQFMKLTFEQINELLIDDDLQLPSEIVAFQIAMKWLEFDQKRVKYAADLLSNIRFGTISAQDLVNYVQSVPRMMQDADCHRLLVDAMNYHLLPYHQNTLQSRRTRIRGGCRVLVTVGGRPGLTEKSLSRDILYRDPENGWSKLTEMPAKSFNQCVAVMDGFLYVAGGEDQNDARNQAKHAVSNFCRYDPRFNTWIHLASMNQKRTHFSLSVFNGLVYAAGGRNAEGSLASLECYVPSTNQWQPKTPLEVARCCHASAVADGRVLVTGGYIANAYSRSVCAYDPASDSWQELPNLSTPRGWHCAVTLSDRVYVMGGSQLGPRGERVDVLTVECYSPATGQWSYAAPLQVGVSTAGVSALHGRAYLVGGWNEGEKKYKKCIQCFSPELNEWTEDDELPEATVGVSCCTLSMPNNVTRESRASSVSSVPVSI.

Alanine 2 bears the N,N,N-trimethylalanine mark. Residues 73–137 (CDLVIGTKTK…AYTGKLTLSL (65 aa)) enclose the BTB domain. Residues 172–273 (CMYVVNIAET…SAQDLVNYVQ (102 aa)) form the BACK domain. 6 Kelch repeats span residues 317-365 (VLVT…VMDG), 366-419 (FLYV…VFNG), 420-466 (LVYA…VADG), 468-513 (VLVT…TLSD), 515-565 (VYVM…ALHG), and 567-614 (AYLV…TLSM).

N-terminus is methylated by METTL11A/NTM1. Strongly expressed in skeletal muscle and weakly in heart. According to PubMed:15302408, not expressed in other tissues. According to PubMed:18719355, abundantly expressed in both embryonic skeletal and heart tissues.

In terms of biological role, transcriptional repressor in MAPK/JNK signaling pathway to regulate cellular functions. Overexpression inhibits the transcriptional activities of both the TPA-response element (TRE) and serum response element (SRE). The chain is Kelch-like protein 31 (KLHL31) from Homo sapiens (Human).